Here is a 241-residue protein sequence, read N- to C-terminus: Probable transcriptional regulatory protein stu0195 (241 aa).

The protein belongs to the TACO1 family. YeeN subfamily.

The protein resides in the cytoplasm. This Streptococcus thermophilus (strain ATCC BAA-250 / LMG 18311) protein is Probable transcriptional regulatory protein stu0195.